A 362-amino-acid polypeptide reads, in one-letter code: Atypical chemokine receptor 3 (362 aa).

The Extracellular portion of the chain corresponds to 1 to 47; the sequence is MDVHLFDYVEPGNYSDINWPCNSSDCIVVDTVQCPAMPNKNVLLYTL. Residues asparagine 13 and asparagine 22 are each glycosylated (N-linked (GlcNAc...) asparagine). The chain crosses the membrane as a helical span at residues 48-68; it reads SFIYIFIFVIGMIANSVVVWV. Residues 69-81 are Cytoplasmic-facing; the sequence is NIQAKTTGYDTHC. Residues 82–102 form a helical membrane-spanning segment; it reads YILNLAIADLWVVITIPVWVV. Over 103-118 the chain is Extracellular; that stretch reads SLVQHNQWPMGELTCK. A disulfide bridge links cysteine 117 with cysteine 196. Residues 119 to 139 traverse the membrane as a helical segment; sequence ITHLIFSINLFGSIFFLACMS. The Cytoplasmic portion of the chain corresponds to 140–162; that stretch reads VDRYLSITYFTSTSSYKKKMVRR. The helical transmembrane segment at 163 to 183 threads the bilayer; it reads VVCVLVWLLAFFVSLPDTYYL. The Extracellular segment spans residues 184–213; that stretch reads KTVTSASNNETYCRSFYPEHSIKEWLIGME. A helical transmembrane segment spans residues 214–234; sequence LVSVILGFAVPFTIIAIFYFL. At 235 to 252 the chain is on the cytoplasmic side; that stretch reads LARAMSASGDQEKHSSRK. Residues 253–273 traverse the membrane as a helical segment; the sequence is IIFSYVVVFLVCWLPYHFVVL. The Extracellular segment spans residues 274 to 296; sequence LDIFSILHYIPFTCQLENVLFTA. Residues 297–319 form a helical membrane-spanning segment; sequence LHVTQCLSLVHCCVNPVLYSFIN. Residues 320 to 362 are Cytoplasmic-facing; that stretch reads RNYRYELMKAFIFKYSAKTGLTKLIDASRVSETEYSALEQNTK. The interval 324–362 is C-terminal cytoplasmic tail; sequence YELMKAFIFKYSAKTGLTKLIDASRVSETEYSALEQNTK. Serine 347, serine 350, and serine 355 each carry phosphoserine.

Belongs to the G-protein coupled receptor 1 family. Atypical chemokine receptor subfamily. In terms of assembly, homodimer. Can form heterodimers with CXCR4; heterodimerization may regulate CXCR4 signaling activity. Interacts with ARRB1 and ARRB2. Post-translationally, the Ser/Thr residues in the C-terminal cytoplasmic tail may be phosphorylated. In terms of processing, ubiquitinated at the Lys residues in its C-terminal cytoplasmic tail and is essential for correct trafficking from and to the cell membrane. Deubiquitinated by CXCL12-stimulation in a reversible manner. In terms of tissue distribution, expressed in vascular smooth muscle cells (at protein level). In brain, expressed in blood vessels, pyramidal cells in hippocampal subfield CA3, mature dentate gyrus granule cells, ventricle walls, olfactory bulb, accumbens shell, supraoptic, lateroanterior and ventromedial hypothalamic nuclei, medial region of thalamus, and motor nuclei, central gray and raphe magnus nucleus of brain stem. Detected in primary neurons, GABAergic neurons, astrocytes, cerebral cortex, ventral striatum and choroid plexus. Not detected in mesencephalon.

It localises to the cell membrane. Its subcellular location is the early endosome. The protein localises to the recycling endosome. Atypical chemokine receptor that controls chemokine levels and localization via high-affinity chemokine binding that is uncoupled from classic ligand-driven signal transduction cascades, resulting instead in chemokine sequestration, degradation, or transcytosis. Also known as interceptor (internalizing receptor) or chemokine-scavenging receptor or chemokine decoy receptor. Acts as a receptor for chemokines CXCL11 and CXCL12/SDF1. Chemokine binding does not activate G-protein-mediated signal transduction but instead induces beta-arrestin recruitment, leading to ligand internalization and activation of MAPK signaling pathway. Required for regulation of CXCR4 protein levels in migrating interneurons, thereby adapting their chemokine responsiveness. In glioma cells, transduces signals via MEK/ERK pathway, mediating resistance to apoptosis. Promotes cell growth and survival. Not involved in cell migration, adhesion or proliferation of normal hematopoietic progenitors but activated by CXCL11 in malignant hemapoietic cells, leading to phosphorylation of ERK1/2 (MAPK3/MAPK1) and enhanced cell adhesion and migration. Plays a regulatory role in CXCR4-mediated activation of cell surface integrins by CXCL12. Required for heart valve development. In terms of biological role, atypical chemokine receptor that controls chemokine levels and localization via high-affinity chemokine binding that is uncoupled from classic ligand-driven signal transduction cascades, resulting instead in chemokine sequestration, degradation, or transcytosis. Also known as interceptor (internalizing receptor) or chemokine-scavenging receptor or chemokine decoy receptor. Acts as a receptor for chemokines CXCL11 and CXCL12/SDF1. Chemokine binding does not activate G-protein-mediated signal transduction but instead induces beta-arrestin recruitment, leading to ligand internalization and activation of MAPK signaling pathway. Required for regulation of CXCR4 protein levels in migrating interneurons, thereby adapting their chemokine responsiveness. In glioma cells, transduces signals via MEK/ERK pathway, mediating resistance to apoptosis. Promotes cell growth and survival. Not involved in cell migration, adhesion or proliferation of normal hematopoietic progenitors but activated by CXCL11 in malignant hemapoietic cells, leading to phosphorylation of ERK1/2 (MAPK3/MAPK1) and enhanced cell adhesion and migration. Plays a regulatory role in CXCR4-mediated activation of cell surface integrins by CXCL12. Required for heart valve development. Regulates axon guidance in the oculomotor system through the regulation of CXCL12 levels. This Rattus norvegicus (Rat) protein is Atypical chemokine receptor 3.